We begin with the raw amino-acid sequence, 140 residues long: 3-hydroxyacyl-[acyl-carrier-protein] dehydratase FabZ (140 aa).

The active site involves histidine 47.

This sequence belongs to the thioester dehydratase family. FabZ subfamily.

It localises to the cytoplasm. It catalyses the reaction a (3R)-hydroxyacyl-[ACP] = a (2E)-enoyl-[ACP] + H2O. Functionally, involved in unsaturated fatty acids biosynthesis. Catalyzes the dehydration of short chain beta-hydroxyacyl-ACPs and long chain saturated and unsaturated beta-hydroxyacyl-ACPs. The chain is 3-hydroxyacyl-[acyl-carrier-protein] dehydratase FabZ from Streptococcus pneumoniae serotype 4 (strain ATCC BAA-334 / TIGR4).